Reading from the N-terminus, the 138-residue chain is Large ribosomal subunit protein bL17 (138 aa).

The protein belongs to the bacterial ribosomal protein bL17 family. As to quaternary structure, part of the 50S ribosomal subunit. Contacts protein L32.

This Nitrobacter winogradskyi (strain ATCC 25391 / DSM 10237 / CIP 104748 / NCIMB 11846 / Nb-255) protein is Large ribosomal subunit protein bL17.